Reading from the N-terminus, the 237-residue chain is tRNA (guanine-N(7)-)-methyltransferase (237 aa).

Residues methionine 1–leucine 24 form a disordered region. The S-adenosyl-L-methionine site is built by glutamate 62, glutamate 87, aspartate 119, and aspartate 141. Aspartate 141 is an active-site residue. Substrate-binding positions include lysine 145, aspartate 177, and threonine 216 to glutamate 219.

This sequence belongs to the class I-like SAM-binding methyltransferase superfamily. TrmB family.

It carries out the reaction guanosine(46) in tRNA + S-adenosyl-L-methionine = N(7)-methylguanosine(46) in tRNA + S-adenosyl-L-homocysteine. Its pathway is tRNA modification; N(7)-methylguanine-tRNA biosynthesis. Functionally, catalyzes the formation of N(7)-methylguanine at position 46 (m7G46) in tRNA. This Sphingopyxis alaskensis (strain DSM 13593 / LMG 18877 / RB2256) (Sphingomonas alaskensis) protein is tRNA (guanine-N(7)-)-methyltransferase.